Consider the following 601-residue polypeptide: Deuterosome assembly protein 1 (601 aa).

Coiled-coil stretches lie at residues 14 to 59, 86 to 196, and 226 to 277; these read CEAE…NAQT, TQNY…GKKQ, and IEKL…ELQS. Residues 305 to 329 are disordered; it reads AQDNRKRVESSYSPSPKEAERKRKE. The stretch at 354–397 forms a coiled coil; it reads EEGLCSEQERLRSEISELTQELHQKEVTIATVMKKAALLERQLK. At serine 544 the chain carries Phosphoserine. Residues 555–586 adopt a coiled-coil conformation; that stretch reads AAQHFLMEEERRAKELEKLLNTHIDELQRHTE.

This sequence belongs to the CEP63 family. In terms of assembly, interacts with CEP152; the interaction is mutually exclusive with CEP63. Highly enriched in multicilia-abundant tissues (trachea and oviduct).

It is found in the cytoplasm. Functionally, key structural component of the deuterosome, a structure that promotes de novo centriole amplification in multiciliated cells. Deuterosome-mediated centriole amplification occurs in terminally differentiated multiciliated cells and can generate more than 100 centrioles. Probably sufficient for the specification and formation of the deuterosome inner core. Interacts with CEP152 and recruits PLK4 to activate centriole biogenesis. This chain is Deuterosome assembly protein 1, found in Mus musculus (Mouse).